The chain runs to 337 residues: Monoacylglycerol lipase ABHD6 (337 aa).

The Extracellular segment spans residues 1-8 (MDLDVVNM). A helical; Signal-anchor for type II membrane protein membrane pass occupies residues 9–29 (FVIAGGTLAIPILAFVASFLL). At 30 to 337 (WPSALIRIYY…HNTDNNKKLD (308 aa)) the chain is on the cytoplasmic side. The 242-residue stretch at 72–313 (PSILMLHGFS…CGHSVVMERP (242 aa)) folds into the AB hydrolase-1 domain. Position 80 (phenylalanine 80) interacts with (9Z)-octadecenoate. Serine 148 functions as the Nucleophile in the catalytic mechanism. Methionine 149 contacts (9Z)-octadecenoate. Active-site charge relay system residues include aspartate 278 and histidine 306. Residue histidine 306 coordinates (9Z)-octadecenoate.

Belongs to the AB hydrolase superfamily.

It is found in the late endosome membrane. The protein localises to the lysosome membrane. The protein resides in the mitochondrion membrane. It catalyses the reaction Hydrolyzes glycerol monoesters of long-chain fatty acids.. The catalysed reaction is 1-octanoylglycerol + H2O = octanoate + glycerol + H(+). The enzyme catalyses 1-decanoylglycerol + H2O = decanoate + glycerol + H(+). It carries out the reaction 1-dodecanoylglycerol + H2O = dodecanoate + glycerol + H(+). It catalyses the reaction 1-tetradecanoylglycerol + H2O = tetradecanoate + glycerol + H(+). The catalysed reaction is 2-hexadecanoylglycerol + H2O = glycerol + hexadecanoate + H(+). The enzyme catalyses 2-(9Z-octadecenoyl)-glycerol + H2O = glycerol + (9Z)-octadecenoate + H(+). It carries out the reaction 1-(9Z-octadecenoyl)-glycerol + H2O = glycerol + (9Z)-octadecenoate + H(+). It catalyses the reaction 2-(9Z,12Z-octadecadienoyl)-glycerol + H2O = (9Z,12Z)-octadecadienoate + glycerol + H(+). The catalysed reaction is 2-(5Z,8Z,11Z,14Z-eicosatetraenoyl)-glycerol + H2O = glycerol + (5Z,8Z,11Z,14Z)-eicosatetraenoate + H(+). The enzyme catalyses 1-(5Z,8Z,11Z,14Z-eicosatetraenoyl)-glycerol + H2O = glycerol + (5Z,8Z,11Z,14Z)-eicosatetraenoate + H(+). It carries out the reaction 1-(9Z,12Z-octadecadienoyl)-glycerol + H2O = (9Z,12Z)-octadecadienoate + glycerol + H(+). It catalyses the reaction 3-(9Z-octadecenoyl)-sn-glycero-1-phospho-(3'-(9Z-octadecenoyl)-1'-sn-glycerol) + H2O = 3-(9Z-octadecenoyl)-sn-glycero-1-phospho-(1'-sn-glycerol) + (9Z)-octadecenoate + H(+). The catalysed reaction is (S,S)-2-(9Z-octadecenoyl)-sn-glycero-1-phospho-(2'-(9Z-octadecenoyl)-1'-sn-glycerol) + H2O = (S,S)-2-(9Z-octadecenoyl)-sn-glycero-1-phospho-(1'-sn-glycerol) + (9Z)-octadecenoate + H(+). The enzyme catalyses (R,R)-2-(9Z-octadecenoyl)-sn-glycero-3-phospho-(2'-(9Z-octadecenoyl)-3'-sn-glycerol) + H2O = (R,R)-2-(9Z-octadecenoyl)-sn-glycero-3-phospho-(3'-sn-glycerol) + (9Z)-octadecenoate + H(+). In terms of biological role, lipase that preferentially hydrolysis medium-chain saturated monoacylglycerols including 2-arachidonoylglycerol. Through 2-arachidonoylglycerol degradation may regulate endocannabinoid signaling pathways. Also has a lysophosphatidyl lipase activity with a preference for lysophosphatidylglycerol among other lysophospholipids. Also able to degrade bis(monoacylglycero)phosphate (BMP) and constitutes the major enzyme for BMP catabolism. BMP, also known as lysobisphosphatidic acid, is enriched in late endosomes and lysosomes and plays a key role in the formation of intraluminal vesicles and in lipid sorting. The chain is Monoacylglycerol lipase ABHD6 from Homo sapiens (Human).